Consider the following 69-residue polypeptide: Dodecin (69 aa).

An FMN-binding site is contributed by 3–5 (KVY). CoA is bound by residues K6, R28, and 32–34 (TLR). The FMN site is built by D37, W38, R45, Q57, and R65. 65 to 67 (RLE) lines the CoA pocket.

The protein belongs to the dodecin family. In terms of assembly, homododecamer; four homotrimers assemble to form a dodecameric hollow sphere with an outer diameter of about 60 Angstroms. Flavin dimers are bound between subunits with a stoichiometry of 6 flavin dimers per dodecamer. Besides, trimeric coenzyme A molecules can be bound between subunits. A dodecamer can bind simultaneously 12 flavin and 12 coenzyme A molecules.

Functionally, may function as storage protein that sequesters various flavins and other cofactors, thereby protecting the cell against undesirable reactions mediated by the free cofactors. Binds and sequesters FMN, FAD, lumiflavin and lumichrome, and can also bind coenzyme A. This Thermus thermophilus (strain ATCC 27634 / DSM 579 / HB8) protein is Dodecin.